Consider the following 464-residue polypeptide: Zinc transporter 6-A (464 aa).

Residues 1-33 (MGTIYLFRKTQRSLLGKLAQEFRLVTADRRSWK) lie on the Cytoplasmic side of the membrane. Residues 34–54 (ILLFGAINVVCTAFLLTWCSS) traverse the membrane as a helical segment. Residues 55-64 (TNSMALTAYT) are Extracellular-facing. The helical transmembrane segment at 65-85 (YLTIFDLFSLITSLISYWVTM) threads the bilayer. The Cytoplasmic portion of the chain corresponds to 86-98 (KKPSPTYSFGFER). Residues 99-119 (FEVLAVFASTVLAQLGALFIL) traverse the membrane as a helical segment. Residues 120–134 (KESAERFIEQPEIHT) lie on the Extracellular side of the membrane. Residues 135 to 155 (GRLLVGTFVALFFNLFTMLSI) traverse the membrane as a helical segment. Topologically, residues 156-200 (RNKPFAYVSDAASTSWLQEHVADLSRSLCGIIPGLSSIFLPRMNP) are cytoplasmic. A helical membrane pass occupies residues 201-221 (FVLIDIAGALALCITYMLIEI). Topologically, residues 222–223 (NN) are extracellular. A helical membrane pass occupies residues 224 to 244 (YFAVDTASAVAIAVMTFGTMY). The Cytoplasmic portion of the chain corresponds to 245–464 (PMSVYSGKVL…TPGQFTQFRQ (220 aa)).

This sequence belongs to the cation diffusion facilitator (CDF) transporter (TC 2.A.4) family. SLC30A subfamily. Heterodimer with SLC30A5; form a functional zinc ion transmembrane transporter.

The protein localises to the golgi apparatus. The protein resides in the trans-Golgi network membrane. Has probably no intrinsic transporter activity but together with SLC30A5 forms a functional zinc ion:proton antiporter heterodimer, mediating zinc entry into the lumen of organelles along the secretory pathway. As part of that zinc ion:proton antiporter, contributes to zinc ion homeostasis within the early secretory pathway and regulates the activation and folding of enzymes like alkaline phosphatases and enzymes involved in phosphatidylinositol glycan anchor biosynthesis. The protein is Zinc transporter 6-A (slc30a6-a) of Xenopus laevis (African clawed frog).